A 159-amino-acid polypeptide reads, in one-letter code: Phosphopantetheine adenylyltransferase (159 aa).

A substrate-binding site is contributed by Thr9. Residues 9-10 and His17 each bind ATP; that span reads TF. 3 residues coordinate substrate: Lys41, Leu73, and Arg87. Residues 88–90, Glu98, and 123–129 contribute to the ATP site; these read GLR and YMFISAT.

Belongs to the bacterial CoaD family. Homohexamer. It depends on Mg(2+) as a cofactor.

The protein resides in the cytoplasm. The catalysed reaction is (R)-4'-phosphopantetheine + ATP + H(+) = 3'-dephospho-CoA + diphosphate. It participates in cofactor biosynthesis; coenzyme A biosynthesis; CoA from (R)-pantothenate: step 4/5. Reversibly transfers an adenylyl group from ATP to 4'-phosphopantetheine, yielding dephospho-CoA (dPCoA) and pyrophosphate. This is Phosphopantetheine adenylyltransferase from Nitrosomonas europaea (strain ATCC 19718 / CIP 103999 / KCTC 2705 / NBRC 14298).